A 358-amino-acid polypeptide reads, in one-letter code: MHTILINKLMSLKQRFYKLEKSLNNFNTINNKEFYSLSKEHTYLHEIIKYFEEWLNIQKNIVHTKDMLSDIDMHDIVQDELKILNTSKHNLENKIKILLFSDPQDQYNCFIELRAGTGGKEAAIFAGELFRMYSRYIEMQRWNMEIIHATYGECGGYKEIIIKVPVHGSYGQLKFESGGHRVQRIPNTESQGRIHTSTCTIAVIPNIPNAILPEINSNDLRIDTFRSSGAGGQHVNTTDSAIRITHIPSGLSVECQDERSQHKNKSKALSVLKSRLYAINIKQKQQEESNVRRNLIGTGDRSDRIRTYNFQQGRVTDHRIAFTSYKLHDIMNGKLDILIQPIMCKHQATLLDQLTREK.

Position 233 is an N5-methylglutamine (Gln-233).

The protein belongs to the prokaryotic/mitochondrial release factor family. Methylated by PrmC. Methylation increases the termination efficiency of RF1.

Its subcellular location is the cytoplasm. Its function is as follows. Peptide chain release factor 1 directs the termination of translation in response to the peptide chain termination codons UAG and UAA. The polypeptide is Peptide chain release factor 1 (Blochmanniella floridana).